The sequence spans 200 residues: 3-isopropylmalate dehydratase small subunit (200 aa).

The protein belongs to the LeuD family. LeuD type 1 subfamily. As to quaternary structure, heterodimer of LeuC and LeuD.

It catalyses the reaction (2R,3S)-3-isopropylmalate = (2S)-2-isopropylmalate. The protein operates within amino-acid biosynthesis; L-leucine biosynthesis; L-leucine from 3-methyl-2-oxobutanoate: step 2/4. Catalyzes the isomerization between 2-isopropylmalate and 3-isopropylmalate, via the formation of 2-isopropylmaleate. The protein is 3-isopropylmalate dehydratase small subunit of Photobacterium profundum (strain SS9).